A 707-amino-acid polypeptide reads, in one-letter code: Ribosomal RNA large subunit methyltransferase K/L (707 aa).

A THUMP domain is found at 44 to 155 (VIYNLCLWSR…NDILTVSFDL (112 aa)).

It belongs to the methyltransferase superfamily. RlmKL family.

It localises to the cytoplasm. It carries out the reaction guanosine(2445) in 23S rRNA + S-adenosyl-L-methionine = N(2)-methylguanosine(2445) in 23S rRNA + S-adenosyl-L-homocysteine + H(+). The enzyme catalyses guanosine(2069) in 23S rRNA + S-adenosyl-L-methionine = N(2)-methylguanosine(2069) in 23S rRNA + S-adenosyl-L-homocysteine + H(+). Its function is as follows. Specifically methylates the guanine in position 2445 (m2G2445) and the guanine in position 2069 (m7G2069) of 23S rRNA. This chain is Ribosomal RNA large subunit methyltransferase K/L, found in Legionella pneumophila (strain Paris).